The following is a 448-amino-acid chain: tRNA(Ile)-lysidine synthase (448 aa).

Position 27 to 32 (27 to 32) interacts with ATP; sequence SGGVDS.

It belongs to the tRNA(Ile)-lysidine synthase family.

It localises to the cytoplasm. It catalyses the reaction cytidine(34) in tRNA(Ile2) + L-lysine + ATP = lysidine(34) in tRNA(Ile2) + AMP + diphosphate + H(+). Ligates lysine onto the cytidine present at position 34 of the AUA codon-specific tRNA(Ile) that contains the anticodon CAU, in an ATP-dependent manner. Cytidine is converted to lysidine, thus changing the amino acid specificity of the tRNA from methionine to isoleucine. This Vibrio campbellii (strain ATCC BAA-1116) protein is tRNA(Ile)-lysidine synthase.